A 428-amino-acid polypeptide reads, in one-letter code: D-amino acid dehydrogenase (428 aa).

Residue 3–17 (VVILGSGVVGVASAY) coordinates FAD.

Belongs to the DadA oxidoreductase family. FAD serves as cofactor.

It catalyses the reaction a D-alpha-amino acid + A + H2O = a 2-oxocarboxylate + AH2 + NH4(+). The protein operates within amino-acid degradation; D-alanine degradation; NH(3) and pyruvate from D-alanine: step 1/1. In terms of biological role, oxidative deamination of D-amino acids. This Burkholderia pseudomallei (strain 1106a) protein is D-amino acid dehydrogenase.